The chain runs to 568 residues: MGRQWGPSMRVAEQAGCVVSASRAGQPDAGSWSCSGVILSRNPGLVLCHGGIFTPFLRTGSAALTQTGTAFLPGDSCSDDLRLHVQWGPTAASPAGRADQELPGLCTPQCASLGLEPGAPSRARARPLQPPRPAQLLLLLSCPAFRSHFARLFGADAVDQWHFVSSAPDDAVSEEEEEDQLRALGWFALLRVQRGAAAEERRGPVVTVAPLGAVVKGAPLLACGSPFGAFCPDIFLNTLSRGVLSNAAGPLLLTDARCLPGTEGGGVFAARPAGALVALVAAPLCWKAREWVGLTLLCAAAPLLQVARWALARLHPGSASLSVLLPPPDVSTPRGLPLRDLGPPWAAAAVLVECGTVWGSGVVVAPRLVVTCRHVAPREAARVLVHSATPKNVAIWGQVVFATQETSPYDIAVVSLEEELNGVPTPVPAGHFHEGEPVSVVGFGVFGQACGPSVTSGILSAVVRVDGSPVMLQTTCAVHGGSSGGPLFSSGSGDLLGIVASNTRDNNTGATYPHLNFSIPITVLQPALKQYSQTGDLGGLRELDHTTEPVRVVWRLQRPLSEVPRSKL.

A serine protease region spans residues 332 to 568 (TPRGLPLRDL…PLSEVPRSKL (237 aa)). Active-site charge relay system residues include histidine 374, aspartate 410, and serine 483.

The protein belongs to the peptidase S1B family. As to quaternary structure, homodimer. Forms a heterodimer with the C-terminal cleavage product (49 kDa form). Forms a heterodimer with the N-terminal cleavage product (10 kDa form). Interacts with PEX5. Interacts with LONP2. In terms of processing, self-cleavage gives rise to an N-terminal 10-kDa fragment and C-terminal 49-kDa fragment upon import into the peroxisomes. The full-lengh TYSND1 is the active the proteolytic processing of PTS1- and PTS2-proteins and in self-cleavage, and intermolecular self-cleavage of TYSND1 down-regulates its protease activity.

The protein resides in the peroxisome. Its activity is regulated as follows. Inhibited by N-ethylmaleimide (NEM). Not affected by leupeptin or trans-epoxysuccinyl-l-leucylamido-(4-gianidino) butane (E64). In terms of biological role, peroxisomal protease that mediates both the removal of the leader peptide from proteins containing a PTS2 target sequence and processes several PTS1-containing proteins. Catalyzes the processing of PTS1-proteins involved in the peroxisomal beta-oxidation of fatty acids. The polypeptide is Peroxisomal leader peptide-processing protease (Tysnd1) (Mus musculus (Mouse)).